Consider the following 696-residue polypeptide: ATP-dependent zinc metalloprotease FtsH (696 aa).

Residues 1–29 (MWLQVTNCSTLHSSLSYCGANTLSDMAKN) are Cytoplasmic-facing. A helical transmembrane segment spans residues 30 to 50 (LILWLVIAVVLMSVFQSFGPS). At 51–124 (DSAGRQVDYT…LGTPPEEPSL (74 aa)) the chain is on the periplasmic side. The chain crosses the membrane as a helical span at residues 125–145 (LASIFISWFPMLLLIGVWVFF). Topologically, residues 146-696 (MRQMQGGGGG…APKEDDKPQA (551 aa)) are cytoplasmic. An ATP-binding site is contributed by 219–226 (GPPGTGKT). Residue His441 participates in Zn(2+) binding. Glu442 is a catalytic residue. His445 and Asp519 together coordinate Zn(2+). Residues 627–696 (RAPKGWGDTD…APKEDDKPQA (70 aa)) are disordered. A compositionally biased stretch (basic and acidic residues) spans 650-696 (PEAKTESAPEAKAEANVETEEKPVAADSEELKPKAEQAPKEDDKPQA).

The protein in the central section; belongs to the AAA ATPase family. In the C-terminal section; belongs to the peptidase M41 family. Homohexamer. Zn(2+) serves as cofactor.

Its subcellular location is the cell inner membrane. Functionally, acts as a processive, ATP-dependent zinc metallopeptidase for both cytoplasmic and membrane proteins. Plays a role in the quality control of integral membrane proteins. This is ATP-dependent zinc metalloprotease FtsH from Photobacterium profundum (strain SS9).